A 503-amino-acid polypeptide reads, in one-letter code: Catalase (503 aa).

Positions 1–26 (MAKDDKRLTGLFGHPVSDRENSMTAG) are disordered. Active-site residues include His56 and Asn129. Tyr339 lines the heme pocket.

It belongs to the catalase family. Homodimer. It depends on heme as a cofactor.

It carries out the reaction 2 H2O2 = O2 + 2 H2O. Functionally, decomposes hydrogen peroxide into water and oxygen; serves to protect cells from the toxic effects of hydrogen peroxide. The chain is Catalase (katA) from Staphylococcus haemolyticus (strain JCSC1435).